Here is a 516-residue protein sequence, read N- to C-terminus: uncharacterized protein (516 aa).

To H.influenzae HI_0521.

This is an uncharacterized protein from Escherichia coli (strain K12).